The primary structure comprises 201 residues: Small ribosomal subunit protein uS4c (201 aa).

Positions 89–149 (MRLDNILFRL…DEQKSRALIQ (61 aa)) constitute an S4 RNA-binding domain.

This sequence belongs to the universal ribosomal protein uS4 family. Part of the 30S ribosomal subunit. Contacts protein S5. The interaction surface between S4 and S5 is involved in control of translational fidelity.

Its subcellular location is the plastid. The protein localises to the chloroplast. Its function is as follows. One of the primary rRNA binding proteins, it binds directly to 16S rRNA where it nucleates assembly of the body of the 30S subunit. Functionally, with S5 and S12 plays an important role in translational accuracy. The sequence is that of Small ribosomal subunit protein uS4c (rps4) from Coffea arabica (Arabian coffee).